A 93-amino-acid chain; its full sequence is Large ribosomal subunit protein eL42 (93 aa).

Positions 11 and 14 each coordinate Zn(2+). The C4-type zinc finger occupies 11–75 (CPNCDEHHQL…TDLKYRCSEC (65 aa)). The interval 24 to 62 (KVRSGRSSGMKWDARRTKRANASIGNHGRFSKVPVGNKP) is disordered. Zn(2+) contacts are provided by C72 and C75.

It belongs to the eukaryotic ribosomal protein eL42 family. In terms of assembly, part of the 50S ribosomal subunit. The cofactor is Zn(2+).

In terms of biological role, binds to the 23S rRNA. The chain is Large ribosomal subunit protein eL42 from Halobacterium salinarum (strain ATCC 700922 / JCM 11081 / NRC-1) (Halobacterium halobium).